The following is a 230-amino-acid chain: AA9 family lytic polysaccharide monooxygenase H (230 aa).

Positions 1 to 17 are cleaved as a signal peptide; that stretch reads MKTLSAGLLALASAASA. 2 residues coordinate Cu(2+): His-18 and His-89. Cysteines 59 and 178 form a disulfide. The O2 site is built by His-164 and Gln-173. Tyr-175 serves as a coordination point for Cu(2+).

This sequence belongs to the polysaccharide monooxygenase AA9 family. Cu(2+) serves as cofactor.

It localises to the secreted. The catalysed reaction is [(1-&gt;4)-beta-D-glucosyl]n+m + reduced acceptor + O2 = 4-dehydro-beta-D-glucosyl-[(1-&gt;4)-beta-D-glucosyl]n-1 + [(1-&gt;4)-beta-D-glucosyl]m + acceptor + H2O.. In terms of biological role, lytic polysaccharide monooxygenase (LPMO) that depolymerizes crystalline and amorphous polysaccharides via the oxidation of scissile alpha- or beta-(1-4)-glycosidic bonds, yielding primarly C1 oxidation products. Catalysis by LPMOs requires the reduction of the active-site copper from Cu(II) to Cu(I) by a reducing agent and H(2)O(2) or O(2) as a cosubstrate. Active on hemicelluloses, including xylan, glucomannan, and xyloglucan. Preferentially cleaves residual xylan in phosphoric acid-swollen cellulose (PASC). Moreover, when exposed to cellulose-xylan blends, shows a preference for xylan and for releasing oxidized xylooligosaccharides. Has no activity on ivory nut mannan (INM), a linear beta-1,4-linked mannan without substitutions. This Malbranchea cinnamomea (Thermophilic fungus) protein is AA9 family lytic polysaccharide monooxygenase H.